Consider the following 167-residue polypeptide: Urease accessory protein UreE (167 aa).

A disordered region spans residues 135–167 (SGAYGGGHHHSHSHHEGDEFHSKPRLHHFGGSQ). Positions 157 to 167 (KPRLHHFGGSQ) are enriched in basic residues.

It belongs to the UreE family.

Its subcellular location is the cytoplasm. Functionally, involved in urease metallocenter assembly. Binds nickel. Probably functions as a nickel donor during metallocenter assembly. The protein is Urease accessory protein UreE of Nitrosococcus oceani (strain ATCC 19707 / BCRC 17464 / JCM 30415 / NCIMB 11848 / C-107).